Here is a 259-residue protein sequence, read N- to C-terminus: Probable ABC transporter permease protein RC0129 (259 aa).

The next 5 helical transmembrane spans lie at 13 to 35 (TVKF…SSII), 49 to 69 (LFIG…SGAV), 148 to 168 (VITA…IGVM), 195 to 215 (PIDV…ISII), and 237 to 257 (AVVN…ELFF).

It belongs to the MlaE permease family.

It localises to the cell inner membrane. Functionally, could be part of an ABC transporter complex. The chain is Probable ABC transporter permease protein RC0129 from Rickettsia conorii (strain ATCC VR-613 / Malish 7).